Consider the following 232-residue polypeptide: Large ribosomal subunit protein uL1 (232 aa).

This sequence belongs to the universal ribosomal protein uL1 family. In terms of assembly, part of the 50S ribosomal subunit.

Functionally, binds directly to 23S rRNA. The L1 stalk is quite mobile in the ribosome, and is involved in E site tRNA release. Its function is as follows. Protein L1 is also a translational repressor protein, it controls the translation of the L11 operon by binding to its mRNA. The sequence is that of Large ribosomal subunit protein uL1 from Chlamydia trachomatis serovar L2b (strain UCH-1/proctitis).